The following is a 201-amino-acid chain: Recombination protein RecR (201 aa).

The C4-type zinc finger occupies 60-75; it reads CSCCGNVDTIDPCTVC. A Toprim domain is found at 83–178; that stretch reads SVIIVVEDVS…KITRLAHGVP (96 aa).

Belongs to the RecR family.

May play a role in DNA repair. It seems to be involved in an RecBC-independent recombinational process of DNA repair. It may act with RecF and RecO. In Agrobacterium fabrum (strain C58 / ATCC 33970) (Agrobacterium tumefaciens (strain C58)), this protein is Recombination protein RecR.